The chain runs to 328 residues: dTDP-glucose 4,6-dehydratase (328 aa).

NAD(+) contacts are provided by residues 13-14 (FI), 37-40 (DALT), 63-64 (DI), 82-86 (LAAES), and T101. Substrate is bound at residue S86. A substrate-binding site is contributed by T126. The Proton donor role is filled by D127. Catalysis depends on proton acceptor residues E128 and Y150. 150 to 154 (YSASK) is a binding site for NAD(+). N179 contacts substrate. N180 is a binding site for NAD(+). Substrate-binding positions include 189–190 (KL), 205–207 (PLY), R214, N249, and 272–276 (DRKGH).

The protein belongs to the NAD(P)-dependent epimerase/dehydratase family. dTDP-glucose dehydratase subfamily. In terms of assembly, homodimer. The cofactor is NAD(+).

It carries out the reaction dTDP-alpha-D-glucose = dTDP-4-dehydro-6-deoxy-alpha-D-glucose + H2O. Its pathway is antibiotic biosynthesis; streptomycin biosynthesis. Involved in the biosynthesis of the streptose moiety of streptomycin. Catalyzes the dehydration of dTDP-D-glucose to form dTDP-6-deoxy-D-xylo-4-hexulose via a three-step process involving oxidation, dehydration and reduction. The protein is dTDP-glucose 4,6-dehydratase of Streptomyces griseus.